Here is a 156-residue protein sequence, read N- to C-terminus: MPGVTVKDIDQHAVTKAVAVFLKKTGKLKVPDQMDIVKTAKFKELAPYDPDWFYVRCASILRHLYHRSPAGVGSITKIYGGRKRNGVHPSHFCRAADGAARKALQALEHARLVEKHPDGGRKLSSIGQRDLDRIANQIVFKQRDAAKQTGPIVISK.

Belongs to the eukaryotic ribosomal protein eS19 family.

The chain is Small ribosomal subunit protein eS19A (RpS19a) from Drosophila melanogaster (Fruit fly).